The following is a 22-amino-acid chain: Mu-conotoxin SxIIIA (22 aa).

3 disulfide bridges follow: Cys2/Cys15, Cys3/Cys20, and Cys10/Cys21. Ala22 is modified (alanine amide).

It belongs to the conotoxin M superfamily. Expressed by the venom duct.

Its subcellular location is the secreted. Mu-conotoxins block voltage-gated sodium channels (Nav). This synthetic toxin potently blocks rNav1.4/SCN4A (IC(50)= 7 nM). It also moderately blocks rNav1.1/SCN1A (IC(50)=370 nM), rNav1.2/SCN2A (IC(50)=1 uM), and mNav1.6/SCN6A (IC(50)=570 nM). It is noteworthy that coexpression of subunits beta-2 or beta-4 (but not beta-1 or beta-3) decrease by more that 10-fold the binding potency of the toxin to rNav1.6. It is also noteworthy that the toxin is 50-fold more potent on mouse Nav1.6 than on rat Nav1.6. In vivo, when injected intraperitoneally or subcutaneously in mice, causes motor impairment, paralysis and death. The protein is Mu-conotoxin SxIIIA of Conus striolatus (Cone snail).